A 367-amino-acid chain; its full sequence is tRNA/tmRNA (uracil-C(5))-methyltransferase (367 aa).

Gln190, Tyr218, Asn223, Glu239, and Asp299 together coordinate S-adenosyl-L-methionine. Cys324 (nucleophile) is an active-site residue. Glu358 functions as the Proton acceptor in the catalytic mechanism.

This sequence belongs to the class I-like SAM-binding methyltransferase superfamily. RNA M5U methyltransferase family. TrmA subfamily.

It catalyses the reaction uridine(54) in tRNA + S-adenosyl-L-methionine = 5-methyluridine(54) in tRNA + S-adenosyl-L-homocysteine + H(+). It carries out the reaction uridine(341) in tmRNA + S-adenosyl-L-methionine = 5-methyluridine(341) in tmRNA + S-adenosyl-L-homocysteine + H(+). Its function is as follows. Dual-specificity methyltransferase that catalyzes the formation of 5-methyluridine at position 54 (m5U54) in all tRNAs, and that of position 341 (m5U341) in tmRNA (transfer-mRNA). The chain is tRNA/tmRNA (uracil-C(5))-methyltransferase from Erwinia tasmaniensis (strain DSM 17950 / CFBP 7177 / CIP 109463 / NCPPB 4357 / Et1/99).